Reading from the N-terminus, the 340-residue chain is CRISPR system Cmr subunit Cmr6 (340 aa).

The protein belongs to the CRISPR system Cmr6 family. As to quaternary structure, part of the type III-B Cmr ribonucleoprotein (RNP) complex, an elongated RNP with Cmr2 and Cmr3 as the base, with Cmr4 and Cmr5 forming a helical core along the mature crRNA (39 or 45 nt in length), while the complex is capped by Cmr6 and Cmr1. The 5' end of the crRNA is bound to Cmr2 and Cmr3, while Cmr6 and a Cmr1 subunit (Cmr1-1 or Cmr1-2) cap the 3' end of the crRNA. The target RNA lies antiparallel to the crRNA, with its 5' end near Cmr1 and Cmr6 and its 3' end near Cmr2 and Cmr3; major target cleavage occurs nears the junction of Cmr1/Cmr6 and Cmr4/Cmr, with minor cleavage occurring at 6 nt intervals which coincide with the proposed spacing of Cmr4 subunits. Interacts with Cmr4 and Cmr5.

The protein localises to the cytoplasm. Its function is as follows. CRISPR (clustered regularly interspaced short palindromic repeat), is an adaptive immune system that provides protection against mobile genetic elements (viruses, transposable elements and conjugative plasmids). CRISPR clusters contain sequences complementary to antecedent mobile elements and target invading nucleic acids. CRISPR clusters are transcribed and processed into CRISPR RNA (crRNA), formerly called psiRNA (prokaryotic silencing) in this organism. Part of the Cmr ribonucleoprotein complex which has divalent cation-dependent endoribonuclease activity specific for ssRNA complementary to the crRNA (target RNA), generating 5' hydroxy- and 3' phosphate or 2'-3' cyclic phosphate termini. Cmr4 is probably the subunit that cleaves target RNA. Cmr complex does not cleave ssDNA complementary to the crRNA. Cleavage of invading RNA is guided by the crRNA; substrate cleavage occurs a fixed distance (14 nt) from the 3' end of the crRNA. In vitro reconstitution shows Cmr1-2 and Cmr5 are not absolutely necessary for target cleavage. The chain is CRISPR system Cmr subunit Cmr6 from Pyrococcus furiosus (strain ATCC 43587 / DSM 3638 / JCM 8422 / Vc1).